The sequence spans 519 residues: FAD-dependent monooxygenase macF (519 aa).

Positions Met1–Ala20 are cleaved as a signal peptide. The FAD-binding PCMH-type domain occupies Cys88–Gly262. The residue at position 125 (His125) is a Pros-8alpha-FAD histidine.

Belongs to the oxygen-dependent FAD-linked oxidoreductase family.

Its pathway is secondary metabolite biosynthesis; terpenoid biosynthesis. In terms of biological role, FAD-dependent monooxygenase; part of the gene cluster that mediates the biosynthesis of macrophorins, isoprenoid epoxycyclohexenones containing cyclized drimane moieties. The first step of the pathway is the synthesis of 6-methylsalicylic acid (6-MSA) by the polyketide synthase macA. 6-MSA is then converted to m-cresol by the decarboxylase macB. The cytochrome P450 monooxygenase macC then catalyzes the oxidation of m-cresol to toluquinol. Epoxidation of toluquinol is then performed by the short chain dehydrogenase macD, with the help of macE, and a further prenylation by macG leads to 7-deacetoxyyanuthone A. The next step is the hydroxylation of C-22 of 7-deacetoxyyanuthone A by the cytochrome P450 monooxygenase macH to yield 22-deacetylyanuthone A. O-Mevalon transferase macI then attaches mevalon to the hydroxyl group of 22-deacetylyanuthone A to produce yanuthone E. The terpene cyclase macJ catalyzes the cyclization of 22-deacetylyanuthone A to macrophorin A. MacJ is also able to catalyze cyclization of yanuthone E and 7-deacetoxyyanuthone A to their corresponding macrophorins. The macJ products can be further modified by macH and macJ, as well as by the FAD-dependent monooxygenase macF, to produce additional macrophorins, including 4'-oxomacrophorin A, 4'-oxomacrophorin D and 4'-oxomacrophorin E. This chain is FAD-dependent monooxygenase macF, found in Penicillium terrestre.